We begin with the raw amino-acid sequence, 200 residues long: Dephospho-CoA kinase (200 aa).

The DPCK domain maps to 4-200 (VIGLTGGIAS…AILKKWNIID (197 aa)). ATP is bound at residue 12 to 17 (ASGKST).

Belongs to the CoaE family.

The protein resides in the cytoplasm. It catalyses the reaction 3'-dephospho-CoA + ATP = ADP + CoA + H(+). It participates in cofactor biosynthesis; coenzyme A biosynthesis; CoA from (R)-pantothenate: step 5/5. In terms of biological role, catalyzes the phosphorylation of the 3'-hydroxyl group of dephosphocoenzyme A to form coenzyme A. This is Dephospho-CoA kinase from Bacillus anthracis.